The sequence spans 521 residues: Bifunctional purine biosynthesis protein PurH (521 aa).

The MGS-like domain occupies 1-145; the sequence is MIKQALISVS…KNHRDVTVVV (145 aa).

Belongs to the PurH family.

It catalyses the reaction (6R)-10-formyltetrahydrofolate + 5-amino-1-(5-phospho-beta-D-ribosyl)imidazole-4-carboxamide = 5-formamido-1-(5-phospho-D-ribosyl)imidazole-4-carboxamide + (6S)-5,6,7,8-tetrahydrofolate. The enzyme catalyses IMP + H2O = 5-formamido-1-(5-phospho-D-ribosyl)imidazole-4-carboxamide. Its pathway is purine metabolism; IMP biosynthesis via de novo pathway; 5-formamido-1-(5-phospho-D-ribosyl)imidazole-4-carboxamide from 5-amino-1-(5-phospho-D-ribosyl)imidazole-4-carboxamide (10-formyl THF route): step 1/1. It functions in the pathway purine metabolism; IMP biosynthesis via de novo pathway; IMP from 5-formamido-1-(5-phospho-D-ribosyl)imidazole-4-carboxamide: step 1/1. This chain is Bifunctional purine biosynthesis protein PurH, found in Burkholderia ambifaria (strain MC40-6).